A 790-amino-acid polypeptide reads, in one-letter code: Chorion peroxidase (790 aa).

A signal peptide spans 1–16 (MAKKVLLLSLYSAVLS). Residues 17–209 (TWFGFGYVQC…ARIPRAIRKR (193 aa)) constitute a propeptide that is removed on maturation. An N-acetylcysteine; in Chorion peroxidase light chain modification is found at C210. Residues C216 and C229 are joined by a disulfide bond. A glycan (N-linked (Man) tryptophan) is linked at W259. Catalysis depends on H305, which acts as the Proton acceptor. An N-linked (GlcNAc...) asparagine glycan is attached at N327. Residue Y353 is modified to 3',4'-dihydroxyphenylalanine. C433 and C440 are joined by a disulfide. W479 is a glycosylation site (N-linked (Man) tryptophan). H551 lines the heme b pocket. W680 carries N-linked (Man) tryptophan glycosylation. The cysteines at positions 746 and 774 are disulfide-linked. An N-linked (Man) tryptophan glycan is attached at W785.

This sequence belongs to the peroxidase family. XPO subfamily. Heterodimer. It depends on heme b as a cofactor. In terms of processing, N-glycosylated on Trp by mannose and on Asn by N-acetylglucosamine. There is a hexose glycosylation of an unidentified residue between 654 and 708; Trp-680 is conserved in closely related species and is probably mannosylated.

The protein localises to the secreted. It catalyses the reaction 2 a phenolic donor + H2O2 = 2 a phenolic radical donor + 2 H2O. Its activity is regulated as follows. Extremely resistant to denaturating agents, such as SDS and organic solvents. Involved in the formation of a rigid and insoluble egg chorion by catalyzing chorion protein cross-linking through dityrosine formation and phenol oxidase-catalyzed chorion melanization. In Aedes aegypti (Yellowfever mosquito), this protein is Chorion peroxidase (pxt).